A 105-amino-acid chain; its full sequence is Small ribosomal subunit protein uS10 (105 aa).

Belongs to the universal ribosomal protein uS10 family. As to quaternary structure, part of the 30S ribosomal subunit.

Functionally, involved in the binding of tRNA to the ribosomes. The chain is Small ribosomal subunit protein uS10 from Rickettsia peacockii (strain Rustic).